A 659-amino-acid polypeptide reads, in one-letter code: RNA polymerase II subunit A C-terminal domain phosphatase (659 aa).

The FCP1 homology domain occupies 139 to 303 (ITNRKLVLLV…KNSKEQMPVQ (165 aa)). Residues 351 to 443 (ERHKVLDGCV…LKADENLFQL (93 aa)) enclose the BRCT domain. Positions 484-504 (ALSDDEDDGDNEDEDDDGNDV) are enriched in acidic residues. The interval 484–640 (ALSDDEDDGD…PESDDDDEFE (157 aa)) is disordered. Positions 505-519 (GEDKGDENLEEKQEK) are enriched in basic and acidic residues. The span at 529 to 538 (QNGSVENQSG) shows a compositional bias: polar residues. Acidic residues-rich tracts occupy residues 560 to 576 (MEDEEEESDSDNEDDDT), 596 to 607 (ENEDDAVFDVDD), and 616 to 640 (IDEEEDDEDNEDEEVPESDDDDEFE).

It is found in the nucleus. It catalyses the reaction O-phospho-L-seryl-[protein] + H2O = L-seryl-[protein] + phosphate. The catalysed reaction is O-phospho-L-threonyl-[protein] + H2O = L-threonyl-[protein] + phosphate. During the late stages of oogenesis, dephosphorylates 'Ser-5' of the heptad repeats YSPTSPS in the C-terminal domain of the largest RNA polymerase II subunit ama-1. Similarly, dephosphorylates 'Ser-5' of ama-1 in early embryonic cells prior to the activation of the zygotic transcription program at the 4-cell embryonic stage. May dephosphorylate 'Ser-2' of the ama-1 heptad repeats YSPTSPS in embryonic somatic and germline cells. The chain is RNA polymerase II subunit A C-terminal domain phosphatase from Caenorhabditis elegans.